Reading from the N-terminus, the 323-residue chain is NADH-cytochrome b5 reductase 2 (323 aa).

Residues 32-48 (LAPIYVAVGLTGLGVGL) traverse the membrane as a helical segment. An FAD-binding FR-type domain is found at 72 to 177 (QGWVDLKLAQ…KGPIPKYPWE (106 aa)). 180–215 (KHKHICLIAGGTGITPMYQLARKIFKDPEDQTKVTL) contacts FAD.

It belongs to the flavoprotein pyridine nucleotide cytochrome reductase family. FAD serves as cofactor.

It is found in the mitochondrion outer membrane. The enzyme catalyses 2 Fe(III)-[cytochrome b5] + NADH = 2 Fe(II)-[cytochrome b5] + NAD(+) + H(+). Functionally, may mediate the reduction of outer membrane cytochrome b5. The chain is NADH-cytochrome b5 reductase 2 (mcr1) from Neosartorya fischeri (strain ATCC 1020 / DSM 3700 / CBS 544.65 / FGSC A1164 / JCM 1740 / NRRL 181 / WB 181) (Aspergillus fischerianus).